Here is a 248-residue protein sequence, read N- to C-terminus: Ribonuclease PH (248 aa).

Phosphate contacts are provided by residues arginine 86 and glycine 124 to arginine 126.

Belongs to the RNase PH family. Homohexameric ring arranged as a trimer of dimers.

It carries out the reaction tRNA(n+1) + phosphate = tRNA(n) + a ribonucleoside 5'-diphosphate. Phosphorolytic 3'-5' exoribonuclease that plays an important role in tRNA 3'-end maturation. Removes nucleotide residues following the 3'-CCA terminus of tRNAs; can also add nucleotides to the ends of RNA molecules by using nucleoside diphosphates as substrates, but this may not be physiologically important. Probably plays a role in initiation of 16S rRNA degradation (leading to ribosome degradation) during starvation. The sequence is that of Ribonuclease PH from Clostridium perfringens (strain ATCC 13124 / DSM 756 / JCM 1290 / NCIMB 6125 / NCTC 8237 / Type A).